A 354-amino-acid chain; its full sequence is Ferredoxin--NADP reductase (354 aa).

Positions 39, 47, 52, 92, 127, 296, and 337 each coordinate FAD.

Belongs to the ferredoxin--NADP reductase type 2 family. Homodimer. Requires FAD as cofactor.

The catalysed reaction is 2 reduced [2Fe-2S]-[ferredoxin] + NADP(+) + H(+) = 2 oxidized [2Fe-2S]-[ferredoxin] + NADPH. The polypeptide is Ferredoxin--NADP reductase (Albidiferax ferrireducens (strain ATCC BAA-621 / DSM 15236 / T118) (Rhodoferax ferrireducens)).